A 128-amino-acid polypeptide reads, in one-letter code: Protein C10 (128 aa).

It belongs to the UPF0456 family.

It is found in the cytoplasm. This is Protein C10 from Xenopus tropicalis (Western clawed frog).